A 75-amino-acid chain; its full sequence is Sec-independent protein translocase protein TatA (75 aa).

The chain crosses the membrane as a helical span at residues 1-21; the sequence is MGGISIWQLLIIVAIIVLLFG. A disordered region spans residues 50 to 75; that stretch reads DAEFKSLNKDESATAGSEKVKDKEQA.

This sequence belongs to the TatA/E family. The Tat system comprises two distinct complexes: a TatABC complex, containing multiple copies of TatA, TatB and TatC subunits, and a separate TatA complex, containing only TatA subunits. Substrates initially bind to the TatABC complex, which probably triggers association of the separate TatA complex to form the active translocon.

The protein resides in the cell inner membrane. Its function is as follows. Part of the twin-arginine translocation (Tat) system that transports large folded proteins containing a characteristic twin-arginine motif in their signal peptide across membranes. TatA could form the protein-conducting channel of the Tat system. The sequence is that of Sec-independent protein translocase protein TatA from Mannheimia succiniciproducens (strain KCTC 0769BP / MBEL55E).